The following is a 190-amino-acid chain: Elongation factor P-like protein (190 aa).

Belongs to the elongation factor P family.

This chain is Elongation factor P-like protein, found in Shigella boydii serotype 4 (strain Sb227).